Consider the following 869-residue polypeptide: Aconitate hydratase A (869 aa).

Positions 411, 477, and 480 each coordinate [4Fe-4S] cluster.

This sequence belongs to the aconitase/IPM isomerase family. In terms of assembly, monomer. Requires [4Fe-4S] cluster as cofactor.

The enzyme catalyses citrate = D-threo-isocitrate. The catalysed reaction is (2S,3R)-3-hydroxybutane-1,2,3-tricarboxylate = 2-methyl-cis-aconitate + H2O. It functions in the pathway carbohydrate metabolism; tricarboxylic acid cycle; isocitrate from oxaloacetate: step 2/2. It participates in organic acid metabolism; propanoate degradation. Involved in the catabolism of short chain fatty acids (SCFA) via the tricarboxylic acid (TCA)(acetyl degradation route) and the 2-methylcitrate cycle I (propionate degradation route). Catalyzes the reversible isomerization of citrate to isocitrate via cis-aconitate. Could catalyze the hydration of 2-methyl-cis-aconitate to yield (2S,3R)-2-methylisocitrate. The apo form of AcnA functions as a RNA-binding regulatory protein. The polypeptide is Aconitate hydratase A (Cupriavidus necator (Alcaligenes eutrophus)).